The sequence spans 394 residues: 1-deoxy-D-xylulose 5-phosphate reductoisomerase (394 aa).

NADPH is bound by residues T14, G15, S16, I17, G40, N43, and N130. K131 contacts 1-deoxy-D-xylulose 5-phosphate. An NADPH-binding site is contributed by E132. D154 lines the Mn(2+) pocket. S155, E156, S180, and H203 together coordinate 1-deoxy-D-xylulose 5-phosphate. E156 is a Mn(2+) binding site. G209 is an NADPH binding site. 4 residues coordinate 1-deoxy-D-xylulose 5-phosphate: S216, N221, K222, and E225. E225 contacts Mn(2+).

Belongs to the DXR family. The cofactor is Mg(2+). Mn(2+) serves as cofactor.

It catalyses the reaction 2-C-methyl-D-erythritol 4-phosphate + NADP(+) = 1-deoxy-D-xylulose 5-phosphate + NADPH + H(+). It functions in the pathway isoprenoid biosynthesis; isopentenyl diphosphate biosynthesis via DXP pathway; isopentenyl diphosphate from 1-deoxy-D-xylulose 5-phosphate: step 1/6. In terms of biological role, catalyzes the NADPH-dependent rearrangement and reduction of 1-deoxy-D-xylulose-5-phosphate (DXP) to 2-C-methyl-D-erythritol 4-phosphate (MEP). This chain is 1-deoxy-D-xylulose 5-phosphate reductoisomerase, found in Corynebacterium efficiens (strain DSM 44549 / YS-314 / AJ 12310 / JCM 11189 / NBRC 100395).